Here is a 621-residue protein sequence, read N- to C-terminus: Rab proteins geranylgeranyltransferase component A 2 (621 aa).

The segment at Val-113–Ala-171 is disordered. The span at Asp-115–Leu-125 shows a compositional bias: polar residues. Residues Pro-155–Leu-166 are compositionally biased toward basic and acidic residues.

This sequence belongs to the Rab GDI family. Monomer. Heterotrimer composed of RABGGTA, RABGGTB and CHML; within this trimer, RABGGTA and RABGGTB form the catalytic component B, while CHML (component A) mediates Rab protein binding. Interacts with RAB1A, RAB7A and RAB27A, but has much lower affinity for RAB1A, RAB7A and RAB27A than CHM. Interacts with the non-phosphorylated forms of RAB3A, RAB3B, RAB3C, RAB3D, RAB5B, RAB5C, RAB8A, RAB8B, RAB10, RAB12, RAB35, and RAB43.

The protein resides in the cytoplasm. The protein localises to the cytosol. Its function is as follows. Substrate-binding subunit (component A) of the Rab geranylgeranyltransferase (GGTase) complex. Binds unprenylated Rab proteins and presents the substrate peptide to the catalytic component B. The component A is thought to be regenerated by transferring its prenylated Rab back to the donor membrane. Less effective than CHM in supporting prenylation of Rab3 family. The protein is Rab proteins geranylgeranyltransferase component A 2 (Chml) of Mus musculus (Mouse).